The sequence spans 372 residues: Queuine tRNA-ribosyltransferase (372 aa).

Asp-92 acts as the Proton acceptor in catalysis. Substrate contacts are provided by residues 92–96, Asp-146, Gln-188, and Gly-215; that span reads DSGGY. Residues 246 to 252 form an RNA binding region; the sequence is GIGSLRE. Asp-265 (nucleophile) is an active-site residue. Residues 270–274 form an RNA binding; important for wobble base 34 recognition region; that stretch reads TRLGR. Positions 303, 305, 308, and 334 each coordinate Zn(2+).

The protein belongs to the queuine tRNA-ribosyltransferase family. Homodimer. Within each dimer, one monomer is responsible for RNA recognition and catalysis, while the other monomer binds to the replacement base PreQ1. The cofactor is Zn(2+).

It carries out the reaction 7-aminomethyl-7-carbaguanine + guanosine(34) in tRNA = 7-aminomethyl-7-carbaguanosine(34) in tRNA + guanine. The protein operates within tRNA modification; tRNA-queuosine biosynthesis. Catalyzes the base-exchange of a guanine (G) residue with the queuine precursor 7-aminomethyl-7-deazaguanine (PreQ1) at position 34 (anticodon wobble position) in tRNAs with GU(N) anticodons (tRNA-Asp, -Asn, -His and -Tyr). Catalysis occurs through a double-displacement mechanism. The nucleophile active site attacks the C1' of nucleotide 34 to detach the guanine base from the RNA, forming a covalent enzyme-RNA intermediate. The proton acceptor active site deprotonates the incoming PreQ1, allowing a nucleophilic attack on the C1' of the ribose to form the product. After dissociation, two additional enzymatic reactions on the tRNA convert PreQ1 to queuine (Q), resulting in the hypermodified nucleoside queuosine (7-(((4,5-cis-dihydroxy-2-cyclopenten-1-yl)amino)methyl)-7-deazaguanosine). This chain is Queuine tRNA-ribosyltransferase, found in Prochlorococcus marinus subsp. pastoris (strain CCMP1986 / NIES-2087 / MED4).